Reading from the N-terminus, the 378-residue chain is Glutamate 5-kinase (378 aa).

An ATP-binding site is contributed by Lys-19. The substrate site is built by Ser-60, Asp-147, and Asn-159. Residues 179–180 (SD) and 221–227 (SGGMRTK) contribute to the ATP site. The 78-residue stretch at 285 to 362 (KGTLTIDAGA…GEMEQLLGYR (78 aa)) folds into the PUA domain.

Belongs to the glutamate 5-kinase family.

The protein resides in the cytoplasm. It carries out the reaction L-glutamate + ATP = L-glutamyl 5-phosphate + ADP. It functions in the pathway amino-acid biosynthesis; L-proline biosynthesis; L-glutamate 5-semialdehyde from L-glutamate: step 1/2. In terms of biological role, catalyzes the transfer of a phosphate group to glutamate to form L-glutamate 5-phosphate. This is Glutamate 5-kinase from Gluconobacter oxydans (strain 621H) (Gluconobacter suboxydans).